Consider the following 526-residue polypeptide: ATP synthase subunit alpha (526 aa).

Residue 171–178 coordinates ATP; that stretch reads GDRQTGKT.

The protein belongs to the ATPase alpha/beta chains family. In terms of assembly, F-type ATPases have 2 components, CF(1) - the catalytic core - and CF(0) - the membrane proton channel. CF(1) has five subunits: alpha(3), beta(3), gamma(1), delta(1), epsilon(1). CF(0) has three main subunits: a(1), b(2) and c(9-12). The alpha and beta chains form an alternating ring which encloses part of the gamma chain. CF(1) is attached to CF(0) by a central stalk formed by the gamma and epsilon chains, while a peripheral stalk is formed by the delta and b chains.

Its subcellular location is the cell inner membrane. The enzyme catalyses ATP + H2O + 4 H(+)(in) = ADP + phosphate + 5 H(+)(out). Produces ATP from ADP in the presence of a proton gradient across the membrane. The alpha chain is a regulatory subunit. This is ATP synthase subunit alpha from Cytophaga hutchinsonii (strain ATCC 33406 / DSM 1761 / CIP 103989 / NBRC 15051 / NCIMB 9469 / D465).